The following is a 792-amino-acid chain: MYRVLRLLPLPLSVAISLSALADEKPPNWGLCPATLPLQGFEQAPGMDKHVVQSRPQLPTNIEGDTLTGTARTPLYQGNVLMARGDQLLGADSVRMDTETDSYVAEGHVRYQDSSILVVADRAEGNQDTDVHKISNIQYQLIGRRGNGVAKSVDIHGQVGQTHEATYTTCDPSQAIWRLRAPEIDVDNVEGFGVARHAVFEVGQWPVLYLPWFKFPIDSRRQTGLLYPQLGYSGRNGFDYAQPIYLNLAPNYDATLYPRYMQKRGFMIDTEFRYLYDDGKWQTRAAFIPNDQLRDKDRGRFSFNGYHNIDNHWQARASLAWVSDTRYMEDFSSRLVGMSSLSSLQSTVGVYGTGETWTAGLMADRWQLTDYSLNESALAYNRQPRLFFNWDKPVLDFLEFGLYSEVVRFKHDDAYLVALQNDGNYLRTGEVIRYYGGTRLDVKPYVSLPFTGASWYVTPTFGWRYSSYYLDSGIAEQLNGSRTPVRSLPIVSLDSGVYLDRDTTVFGRNYLNTLEPRFYYLYVPYRNQSDLPLFDTRAFTFSWGQLFRDSRYTGPDRQNDANQLTLAVTSRWLDQNTGKEDLALSVGQILYFKDSLVTLSDSEERIQKGKSVWVSDVAYNVNDRWTLNATYQWNPNFRRDDLASVRARYLIGSDGIINLAYRYRRNTLDGTTQLKQTDFSFLYPINPRWSAIGRYYYSLLDKKPLEIIGGLQWDSCCLAVRTVLRRHMRDRTGNMDNSIQLEFVFKGLSSVGQDTDRVLRRAILGYYRDDLYLVPPSNTTTDPDAYDPNKIP.

Positions 1–22 (MYRVLRLLPLPLSVAISLSALA) are cleaved as a signal peptide.

Belongs to the LptD family. In terms of assembly, component of the lipopolysaccharide transport and assembly complex. Interacts with LptE and LptA.

It is found in the cell outer membrane. Functionally, together with LptE, is involved in the assembly of lipopolysaccharide (LPS) at the surface of the outer membrane. The sequence is that of LPS-assembly protein LptD from Xylella fastidiosa (strain Temecula1 / ATCC 700964).